We begin with the raw amino-acid sequence, 269 residues long: 3'(2'),5'-bisphosphate nucleotidase CysQ (269 aa).

Glutamate 69, aspartate 89, leucine 91, aspartate 92, and aspartate 216 together coordinate Mg(2+). Glutamate 69 is a substrate binding site. Substrate-binding positions include 91-94 and aspartate 216; that span reads LDGT.

This sequence belongs to the inositol monophosphatase superfamily. CysQ family. Mg(2+) is required as a cofactor.

It is found in the cell inner membrane. The enzyme catalyses adenosine 3',5'-bisphosphate + H2O = AMP + phosphate. In terms of biological role, converts adenosine-3',5'-bisphosphate (PAP) to AMP. The chain is 3'(2'),5'-bisphosphate nucleotidase CysQ from Haemophilus influenzae (strain ATCC 51907 / DSM 11121 / KW20 / Rd).